The sequence spans 681 residues: DNA ligase (681 aa).

Residues 32 to 36, 81 to 82, and glutamate 113 each bind NAD(+); these read DIEYD and SL. The active-site N6-AMP-lysine intermediate is the lysine 115. The NAD(+) site is built by arginine 136, glutamate 173, lysine 290, and lysine 314. Cysteine 408, cysteine 411, cysteine 426, and cysteine 432 together coordinate Zn(2+). The 86-residue stretch at 596–681 folds into the BRCT domain; it reads EIDSPFAGKT…LNNHGDVSTL (86 aa).

It belongs to the NAD-dependent DNA ligase family. LigA subfamily. Mg(2+) serves as cofactor. Requires Mn(2+) as cofactor.

It catalyses the reaction NAD(+) + (deoxyribonucleotide)n-3'-hydroxyl + 5'-phospho-(deoxyribonucleotide)m = (deoxyribonucleotide)n+m + AMP + beta-nicotinamide D-nucleotide.. In terms of biological role, DNA ligase that catalyzes the formation of phosphodiester linkages between 5'-phosphoryl and 3'-hydroxyl groups in double-stranded DNA using NAD as a coenzyme and as the energy source for the reaction. It is essential for DNA replication and repair of damaged DNA. This chain is DNA ligase, found in Pectobacterium atrosepticum (strain SCRI 1043 / ATCC BAA-672) (Erwinia carotovora subsp. atroseptica).